A 667-amino-acid chain; its full sequence is DNA ligase (667 aa).

Residues 32–36 (DSEYD), 81–82 (SL), and E110 contribute to the NAD(+) site. K112 functions as the N6-AMP-lysine intermediate in the catalytic mechanism. NAD(+) contacts are provided by R133, E167, K283, and K307. The Zn(2+) site is built by C401, C404, C419, and C424. Residues 586–667 (EGHPEFSGKT…FVDKQNELNS (82 aa)) enclose the BRCT domain.

Belongs to the NAD-dependent DNA ligase family. LigA subfamily. It depends on Mg(2+) as a cofactor. Mn(2+) serves as cofactor.

The catalysed reaction is NAD(+) + (deoxyribonucleotide)n-3'-hydroxyl + 5'-phospho-(deoxyribonucleotide)m = (deoxyribonucleotide)n+m + AMP + beta-nicotinamide D-nucleotide.. In terms of biological role, DNA ligase that catalyzes the formation of phosphodiester linkages between 5'-phosphoryl and 3'-hydroxyl groups in double-stranded DNA using NAD as a coenzyme and as the energy source for the reaction. It is essential for DNA replication and repair of damaged DNA. The polypeptide is DNA ligase (Staphylococcus aureus (strain bovine RF122 / ET3-1)).